A 195-amino-acid polypeptide reads, in one-letter code: Imidazoleglycerol-phosphate dehydratase (195 aa).

It belongs to the imidazoleglycerol-phosphate dehydratase family.

The protein resides in the cytoplasm. It carries out the reaction D-erythro-1-(imidazol-4-yl)glycerol 3-phosphate = 3-(imidazol-4-yl)-2-oxopropyl phosphate + H2O. It participates in amino-acid biosynthesis; L-histidine biosynthesis; L-histidine from 5-phospho-alpha-D-ribose 1-diphosphate: step 6/9. The protein is Imidazoleglycerol-phosphate dehydratase of Methylorubrum populi (strain ATCC BAA-705 / NCIMB 13946 / BJ001) (Methylobacterium populi).